The sequence spans 211 residues: WW domain-containing protein WWM1 (211 aa).

A WW domain is found at 9–43 (PQVPSGWKAVFDDEYQTWYYVDLSTNSSQWEPPRG). The segment at 32–116 (STNSSQWEPP…QRYYPQQAPM (85 aa)) is disordered. Residues Lys50 and Lys60 each participate in a glycyl lysine isopeptide (Lys-Gly) (interchain with G-Cter in ubiquitin) cross-link. Ser75 is modified (phosphoserine). Position 78 is a phosphothreonine (Thr78). Over residues 80-116 (QVQAGAQAQQPRYYQPQQPQYPQYPQQQRYYPQQAPM) the composition is skewed to low complexity.

Interacts with metacaspase MCA1.

Its subcellular location is the cytoplasm. The protein localises to the nucleus. It is found in the mitochondrion. Its function is as follows. Involved in apoptosis. May play a role in nuclear function controlling cellular proliferation coupled to mitochondrial biogenesis. Causes impaired growth when overexpressed. The polypeptide is WW domain-containing protein WWM1 (WWM1) (Saccharomyces cerevisiae (strain ATCC 204508 / S288c) (Baker's yeast)).